The following is a 134-amino-acid chain: Putative pre-16S rRNA nuclease (134 aa).

Belongs to the YqgF nuclease family.

Its subcellular location is the cytoplasm. Its function is as follows. Could be a nuclease involved in processing of the 5'-end of pre-16S rRNA. In Helicobacter pylori (strain P12), this protein is Putative pre-16S rRNA nuclease.